A 278-amino-acid polypeptide reads, in one-letter code: PILR alpha-associated neural protein (278 aa).

Residues 1–27 form the signal peptide; it reads MWSAQLLSQLLPLWPLLLLSVLPPAQG. The tract at residues 25–93 is disordered; the sequence is AQGSSHRSPP…PSGFEEGPPS (69 aa). Over 28 to 174 the chain is Extracellular; sequence SSHRSPPAPA…FGGRGEGVDP (147 aa). Residue T136 is glycosylated (O-linked (GalNAc...) threonine). A helical transmembrane segment spans residues 175–195; that stretch reads QLYVTITISIIIVLVATGIIF. Topologically, residues 196 to 278 are cytoplasmic; sequence KFCWDRSQKR…QLNRIPLVNL (83 aa). The segment at 206–278 is disordered; it reads RRPSGQQGAL…QLNRIPLVNL (73 aa). Residues 209–225 are compositionally biased toward polar residues; that stretch reads SGQQGALRQEESQQPLT.

O-glycosylation at Thr-136 is essential for recognition by PILRA. Mainly expressed in brain and spinal cord. Weak expression also detected in heart, kidney, spleen and lymph node. Virtually no expression detected in liver and embryo relative to brain.

The protein localises to the membrane. Acts as a ligand for PILRA in neuronal tissues, where it may be involved in immune regulation. The polypeptide is PILR alpha-associated neural protein (Pianp) (Mus musculus (Mouse)).